The sequence spans 284 residues: 2-dehydro-3-deoxyphosphooctonate aldolase (284 aa).

The protein belongs to the KdsA family.

Its subcellular location is the cytoplasm. It catalyses the reaction D-arabinose 5-phosphate + phosphoenolpyruvate + H2O = 3-deoxy-alpha-D-manno-2-octulosonate-8-phosphate + phosphate. It functions in the pathway carbohydrate biosynthesis; 3-deoxy-D-manno-octulosonate biosynthesis; 3-deoxy-D-manno-octulosonate from D-ribulose 5-phosphate: step 2/3. Its pathway is bacterial outer membrane biogenesis; lipopolysaccharide biosynthesis. This is 2-dehydro-3-deoxyphosphooctonate aldolase from Burkholderia multivorans (strain ATCC 17616 / 249).